A 340-amino-acid chain; its full sequence is Ketol-acid reductoisomerase (NADP(+)) (340 aa).

Positions 3-182 (VQMEYEKDVK…GAARVGLLET (180 aa)) constitute a KARI N-terminal Rossmann domain. NADP(+) is bound by residues 26–29 (YGSQ), Arg49, Ser53, and 83–86 (DEIQ). The active site involves His108. Residue Gly134 coordinates NADP(+). The KARI C-terminal knotted domain occupies 183 to 328 (TYKEETEEDL…AELRKAMPFV (146 aa)). Positions 191, 195, 227, and 231 each coordinate Mg(2+). Position 252 (Ser252) interacts with substrate.

Belongs to the ketol-acid reductoisomerase family. Mg(2+) serves as cofactor.

It catalyses the reaction (2R)-2,3-dihydroxy-3-methylbutanoate + NADP(+) = (2S)-2-acetolactate + NADPH + H(+). The catalysed reaction is (2R,3R)-2,3-dihydroxy-3-methylpentanoate + NADP(+) = (S)-2-ethyl-2-hydroxy-3-oxobutanoate + NADPH + H(+). It participates in amino-acid biosynthesis; L-isoleucine biosynthesis; L-isoleucine from 2-oxobutanoate: step 2/4. The protein operates within amino-acid biosynthesis; L-valine biosynthesis; L-valine from pyruvate: step 2/4. In terms of biological role, involved in the biosynthesis of branched-chain amino acids (BCAA). Catalyzes an alkyl-migration followed by a ketol-acid reduction of (S)-2-acetolactate (S2AL) to yield (R)-2,3-dihydroxy-isovalerate. In the isomerase reaction, S2AL is rearranged via a Mg-dependent methyl migration to produce 3-hydroxy-3-methyl-2-ketobutyrate (HMKB). In the reductase reaction, this 2-ketoacid undergoes a metal-dependent reduction by NADPH to yield (R)-2,3-dihydroxy-isovalerate. The protein is Ketol-acid reductoisomerase (NADP(+)) of Streptococcus pneumoniae (strain CGSP14).